The primary structure comprises 298 residues: Mitochondrial glycine transporter (298 aa).

Solcar repeat units follow at residues 5–84 (TKTR…MRTA), 105–189 (LTTY…AKEV), and 211–295 (TSTL…LIKL). The next 6 membrane-spanning stretches (helical) occupy residues 11–36 (LIGGFFGGLTSAVALQPLDLLKTRIQ), 59–85 (GTLPSAIRTSLGSALYLSSLNLMRTAI), 111–136 (LISGALARGAVGYMTMPVTVIKVRYE), 164–187 (GFGPTLVRDAPYSGIYVLLYEKAK), 215–241 (VNSTSAILSACLATTITAPFDTIKTRM), and 270–288 (GLSMRLTRKALSAGIAWGI).

The protein belongs to the mitochondrial carrier (TC 2.A.29) family. SLC25A38 subfamily.

The protein localises to the mitochondrion inner membrane. It catalyses the reaction glycine(in) = glycine(out). In terms of biological role, mitochondrial glycine transporter that imports glycine into the mitochondrial matrix. Plays an important role in providing glycine for the first enzymatic step in heme biosynthesis, the condensation of glycine with succinyl-CoA to produce 5-aminolevulinate (ALA) in the mitochondrial matrix. The protein is Mitochondrial glycine transporter of Vanderwaltozyma polyspora (strain ATCC 22028 / DSM 70294 / BCRC 21397 / CBS 2163 / NBRC 10782 / NRRL Y-8283 / UCD 57-17) (Kluyveromyces polysporus).